Here is a 527-residue protein sequence, read N- to C-terminus: MTSFFDSDSSSNVAEYSVSELSGSIKRTLEQAFEHVRVRGEISGYRGPHSSGHAYFALKDDRARMEAVIWKGTFARLKLRPEEGMEVIATGRVTTFPGSSKYQIVIDSLEPAGAGALMALLEERKRKLAAEGLFDAARKRPLPFMPKVIGVVTSPTGAVIRDILHRIADRFPVHVVVWPVRVQGDGASEEVAAAIRGFNALEEGGPIPRPDVLIVARGGGSLEDLWGFNDEAVVRAVAASGIPLISAVGHETDWTLIDYASDQRAPTPTGAAEMAVPVKADLEAQVANLSARLQAAATRQMDHRRHALRALARALPSLDQLLALPRRRFDEAAAGLGRGLQMNTANKRRSFERIAAHLRPELLTTRIREQRRHLLEAINKAERCVERQIDRRQARVSAADASLRTLPSRLAGQIHRSSDRVSGLGRRADAAMAAEMRRLKGALAAQDRVLQSLSYRNVLQRGFALVRDAAGDPVKQAAAVTAGMALSLEFADGRVSAVAGEEGAPPPAAPKKRASRPVVPTKQGSLF.

Residues 499–527 (AGEEGAPPPAAPKKRASRPVVPTKQGSLF) form a disordered region.

Belongs to the XseA family. In terms of assembly, heterooligomer composed of large and small subunits.

It localises to the cytoplasm. The catalysed reaction is Exonucleolytic cleavage in either 5'- to 3'- or 3'- to 5'-direction to yield nucleoside 5'-phosphates.. In terms of biological role, bidirectionally degrades single-stranded DNA into large acid-insoluble oligonucleotides, which are then degraded further into small acid-soluble oligonucleotides. In Sinorhizobium fredii (strain NBRC 101917 / NGR234), this protein is Exodeoxyribonuclease 7 large subunit.